The chain runs to 459 residues: Alcohol acyl transferase 1 allele GSd (459 aa).

Active-site proton acceptor residues include H164 and N385.

This sequence belongs to the plant acyltransferase family. In terms of tissue distribution, expressed at very low levels in the cortex and skin of ripe fruit.

Involved in the biosynthesis of volatile esters which confer ripe apple fruit flavor. Alcohol acyl transferase that can use a wide range of alcohols as substrate to produce esters. In Malus domestica (Apple), this protein is Alcohol acyl transferase 1 allele GSd.